A 532-amino-acid chain; its full sequence is Cytochrome P450 monooxygenase pgmC (532 aa).

A helical transmembrane segment spans residues 15-32 (ISTLAVLIGFIALLTAWL). Cys438 serves as a coordination point for heme.

It belongs to the cytochrome P450 family. It depends on heme as a cofactor.

Its subcellular location is the membrane. Its pathway is pigment biosynthesis. The protein operates within secondary metabolite biosynthesis. Cytochrome P450 monooxygenase; part of the gene cluster that mediates the biosynthesis of pleosporalin A, ascomycone A, as well as a third cryptic naphthoquinone derived pigment, all responsible for the coloration of conidia. Involved in the oxidation of fusarubinaldehyde at C-9. PgmC has low substrate-specificity and is also able to use the pgmA product 3-acetonyl-1,6,8-trihydroxy-2-naphthaldehyde as a substrate. The pathway begins with the biosynthesis of the cyclized heptaketide 3-acetonyl-1,6,8-trihydroxy-2-naphthaldehyde by the NR-PKS pgmA. The C-6 hydroxyl group is further methylated by the O-methyltransferase pgmB to yield fusarubinaldehyde which is in turn oxidized by the cytochrome P450 monooxygenase pgmC at C-9. The C-1 hydroxyl group is then methylated spontaneously. Although pgmE, pgmD and pgmH are essential for the production of pleosporalin A, it is not the case for the 2 other final products and it remains difficult to assign a specific function to each enzyme. PgmF and pgmG seem not to be involved in pigment biosynthesis although they were regulated by the cluster-specific transcription factor pgmR. The protein is Cytochrome P450 monooxygenase pgmC of Aspergillus terreus (strain NIH 2624 / FGSC A1156).